The following is a 496-amino-acid chain: 6-phosphogluconate dehydrogenase, decarboxylating (496 aa).

NADP(+) is bound by residues 13–18 (GLDVSI), 24–26 (DNV), 68–70 (ITH), and Asn-96. Substrate-binding positions include Asn-96 and 122–124 (SGG). The active-site Proton acceptor is Lys-178. 181 to 182 (HN) provides a ligand contact to substrate. Glu-185 acts as the Proton donor in catalysis. Substrate is bound by residues Arg-300 and His-468. Residues 476-496 (PGEDPGPVSKGPHHYEWRPAK) are disordered.

It belongs to the 6-phosphogluconate dehydrogenase family. Homodimer.

The protein resides in the cytoplasm. The enzyme catalyses 6-phospho-D-gluconate + NADP(+) = D-ribulose 5-phosphate + CO2 + NADPH. Its pathway is carbohydrate degradation; pentose phosphate pathway; D-ribulose 5-phosphate from D-glucose 6-phosphate (oxidative stage): step 3/3. In terms of biological role, catalyzes the oxidative decarboxylation of 6-phosphogluconate to ribulose 5-phosphate and CO(2), with concomitant reduction of NADP to NADPH. This chain is 6-phosphogluconate dehydrogenase, decarboxylating, found in Emericella nidulans (strain FGSC A4 / ATCC 38163 / CBS 112.46 / NRRL 194 / M139) (Aspergillus nidulans).